The following is a 198-amino-acid chain: Transcription factor elt-7 (198 aa).

Residues 1–18 are compositionally biased toward polar residues; it reads MLPETTTLQPLPSVTTIM. Residues 1-20 are disordered; the sequence is MLPETTTLQPLPSVTTIMNE. The segment at 143 to 167 adopts a GATA-type zinc-finger fold; the sequence is CSHCSTTTTTLWRKNDEGNLECNAC.

The protein localises to the nucleus. In terms of biological role, transcriptional activator that binds to the consensus sequence 5'-[AT]GATA[AG]-3'. Required for gut-specific differentiation, specifically acting with the GATA region-binding transcription factor elt-2 to control normal gene expression and promote normal formation of the intestine. May have a protective role in response to infection by Gram-negative bacteria such as P.aeruginosa. The polypeptide is Transcription factor elt-7 (Caenorhabditis elegans).